The primary structure comprises 529 residues: Mitochondrial inner membrane magnesium transporter MIT1 (529 aa).

Coiled-coil stretches lie at residues 336-388 (KIQL…LKNE) and 416-450 (LLET…LNLD). The chain crosses the membrane as a helical span at residues 456–476 (FILLNAKISFSTLFCSICAVI). Topologically, residues 477–492 (TSLFGMNLKNFIEHND) are mitochondrial intermembrane. Residues 493–513 (YAFFIVSIFITSWSIVGIYFT) traverse the membrane as a helical segment. Residues 514–529 (KNINTLLRFFDKYNVK) are Mitochondrial matrix-facing.

This sequence belongs to the CorA metal ion transporter (MIT) (TC 1.A.35) family.

The protein resides in the mitochondrion inner membrane. Functionally, mitochondrial inner membrane magnesium transporter required for mitochondrial magnesium homeostasis. Involved in the development of the sporozoite in the mosquito vector midgut. This Plasmodium falciparum (isolate 3D7) protein is Mitochondrial inner membrane magnesium transporter MIT1.